A 129-amino-acid chain; its full sequence is Large ribosomal subunit protein bL12 (129 aa).

It belongs to the bacterial ribosomal protein bL12 family. In terms of assembly, homodimer. Part of the ribosomal stalk of the 50S ribosomal subunit. Forms a multimeric L10(L12)X complex, where L10 forms an elongated spine to which 2 to 4 L12 dimers bind in a sequential fashion. Binds GTP-bound translation factors.

Its function is as follows. Forms part of the ribosomal stalk which helps the ribosome interact with GTP-bound translation factors. Is thus essential for accurate translation. This is Large ribosomal subunit protein bL12 from Synechococcus sp. (strain CC9605).